We begin with the raw amino-acid sequence, 256 residues long: Protein RKD4 (256 aa).

Residues 130–216 (EKVTVKKKRN…MEEEVKNLEE (87 aa)) enclose the RWP-RK domain. The stretch at 190–224 (RKLKSLNSLIKNLKNVGMEEEVKNLEEHRFLIEQE) forms a coiled coil.

The protein resides in the nucleus. Putative transcription factor. This chain is Protein RKD4 (RKD4), found in Arabidopsis thaliana (Mouse-ear cress).